Reading from the N-terminus, the 450-residue chain is Endosomal transmembrane epsin interactor 1 (450 aa).

A signal peptide spans 1 to 29 (MILLVNLFVLLSVVCVLLNLAGFILGCQG). Topologically, residues 30-85 (AQFVSSVPRCDLVDLGEGKICFCCEEFQPAKCTDKENALKLFPVQPCSAVHLLLKK) are lumenal. Residues 86-106 (VLFALCALNALTTTVCLVAAA) traverse the membrane as a helical segment. Residues 107-450 (LRYLQIFATR…LIGVIRETVL (344 aa)) are Cytoplasmic-facing. The mediates interaction with EPN1 stretch occupies residues 107 to 450 (LRYLQIFATR…LIGVIRETVL (344 aa)). 2 short sequence motifs (PPxY; mediates interaction with ITCH) span residues 148–151 (PPSY) and 194–197 (PPPY). A disordered region spans residues 235–284 (DGDIPNIPAEENASTSTPSSTLVRPIRSRRALPPLRTRSKSDPVLHPSEE). The span at 246 to 256 (NASTSTPSSTL) shows a compositional bias: polar residues. Residues 273–284 (SKSDPVLHPSEE) are compositionally biased toward basic and acidic residues. A Glycyl lysine isopeptide (Lys-Gly) (interchain with G-Cter in ubiquitin) cross-link involves residue lysine 274. A Phosphoserine modification is found at serine 275. Residues lysine 329 and lysine 365 each participate in a glycyl lysine isopeptide (Lys-Gly) (interchain with G-Cter in ubiquitin) cross-link.

It belongs to the ENTREP family. Interacts with ITCH; enhances the ubiquitination of CXCR4 by ITCH and the subsequent endocytosis and desensitization of the receptor. Interacts with EPN1. In terms of processing, monoubiquitinated at Lys-274, Lys-329 and Lys-365 by ITCH. Prominently expressed in muscle.

The protein resides in the early endosome membrane. The protein localises to the late endosome membrane. It localises to the recycling endosome membrane. It is found in the cell membrane. In terms of biological role, functions as an activator of the E3 ubiquitin protein ligase ITCH in the ubiquitination of the CXCL12-activated CXCR4 receptor. Thereby, triggers CXCR4 endocytosis and desensitization, negatively regulating the CXCL12/CXCR4 signaling pathway. In Homo sapiens (Human), this protein is Endosomal transmembrane epsin interactor 1.